The following is a 156-amino-acid chain: UPF0460 protein in nifX 3'region (156 aa).

Belongs to the UPF0460 family.

This is UPF0460 protein in nifX 3'region from Rhodobacter capsulatus (Rhodopseudomonas capsulata).